The primary structure comprises 479 residues: Proline--tRNA ligase (479 aa).

It belongs to the class-II aminoacyl-tRNA synthetase family. ProS type 3 subfamily. In terms of assembly, homodimer.

It localises to the cytoplasm. It carries out the reaction tRNA(Pro) + L-proline + ATP = L-prolyl-tRNA(Pro) + AMP + diphosphate. Functionally, catalyzes the attachment of proline to tRNA(Pro) in a two-step reaction: proline is first activated by ATP to form Pro-AMP and then transferred to the acceptor end of tRNA(Pro). The polypeptide is Proline--tRNA ligase (Mesomycoplasma hyopneumoniae (strain 7448) (Mycoplasma hyopneumoniae)).